Here is a 129-residue protein sequence, read N- to C-terminus: Small ribosomal subunit protein uS9 (129 aa).

The protein belongs to the universal ribosomal protein uS9 family.

This Helicobacter pylori (strain J99 / ATCC 700824) (Campylobacter pylori J99) protein is Small ribosomal subunit protein uS9 (rpsI).